Reading from the N-terminus, the 318-residue chain is NADH-ubiquinone oxidoreductase chain 1 (318 aa).

8 consecutive transmembrane segments (helical) span residues Phe-2 to Leu-22, Ile-68 to Pro-88, Leu-100 to Gly-120, Leu-146 to Ile-166, His-171 to Ala-191, Leu-222 to Phe-242, Glu-253 to Val-273, and Phe-293 to Gly-313.

Belongs to the complex I subunit 1 family. In terms of assembly, core subunit of respiratory chain NADH dehydrogenase (Complex I) which is composed of 45 different subunits.

The protein localises to the mitochondrion inner membrane. The catalysed reaction is a ubiquinone + NADH + 5 H(+)(in) = a ubiquinol + NAD(+) + 4 H(+)(out). Functionally, core subunit of the mitochondrial membrane respiratory chain NADH dehydrogenase (Complex I) which catalyzes electron transfer from NADH through the respiratory chain, using ubiquinone as an electron acceptor. Essential for the catalytic activity and assembly of complex I. This chain is NADH-ubiquinone oxidoreductase chain 1 (MT-ND1), found in Hipposideros armiger terasensis (Formosan leaf-nosed bat).